Here is a 1070-residue protein sequence, read N- to C-terminus: DNA-directed RNA polymerase subunit beta (1070 aa).

This sequence belongs to the RNA polymerase beta chain family. In plastids the minimal PEP RNA polymerase catalytic core is composed of four subunits: alpha, beta, beta', and beta''. When a (nuclear-encoded) sigma factor is associated with the core the holoenzyme is formed, which can initiate transcription.

The protein localises to the plastid. The protein resides in the chloroplast. The enzyme catalyses RNA(n) + a ribonucleoside 5'-triphosphate = RNA(n+1) + diphosphate. Its function is as follows. DNA-dependent RNA polymerase catalyzes the transcription of DNA into RNA using the four ribonucleoside triphosphates as substrates. In Solanum lycopersicum (Tomato), this protein is DNA-directed RNA polymerase subunit beta.